A 663-amino-acid polypeptide reads, in one-letter code: MDRKAELERKKAKLAALREEKDRRRREKEIKDMEEAAGRIGGGAGIDKDQRKDLDEMLSSLGVAPVSEVLSSLSSVNSMTSDNSNTQTPDASLQATVNGQSGGKKQPLNLSVYNVQATNIPPKETLVYTKQTQTTSTGGGNGDVLSCHSSPLSGYMEDWWRPRKAHATDYYDEYNLNPGLEWEDEFTDDEESSLQNLGNGFTSKLPPGYLTHGLPTVKDVAPAITPLEIKKETEVKKEVNELSEEQKQMIILSENFQRFVVRAGRVIERALSENVDIYTDYIGGGDSEEANDERSHARLSLNRVFYDERWSKNRCITSMDWSTHFPELVVGSYHNNEESPNEPDGVVMVWNTKFKKSTPEDVFHCQSAVMSTCFAKFNPNLILGGTYSGQIVLWDNRVQKRTPIQRTPLSAAAHTHPVYCLQMVGTQNAHNVISISSDGKLCSWSLDMLSQPQDTLELQQRQSKAIAITSMAFPANEINSLVMGSEDGYVYSASRHGLRSGVNEVYERHLGPITGISTHYNQLSPDFGHLFLTSSIDWTIKLWSLKDTKPLYSFEDNSDYVMDVAWSPVHPALFAAVDGSGRLDLWNLNQDTEVPTASIVVAGAPALNRVSWTPSGLHVCIGDEAGKLYVYDVAENLAQPSRDEWSRFNTHLSEIKMNQSDEV.

Basic and acidic residues predominate over residues 17–37 (LREEKDRRRREKEIKDMEEAA). Disordered stretches follow at residues 17-52 (LREEKDRRRREKEIKDMEEAAGRIGGGAGIDKDQRK) and 75-107 (SVNSMTSDNSNTQTPDASLQATVNGQSGGKKQP). Positions 75 to 85 (SVNSMTSDNSN) are enriched in low complexity. Positions 86–99 (TQTPDASLQATVNG) are enriched in polar residues. WD repeat units lie at residues 311-360 (SKNR…STPE), 364-404 (HCQS…RTPI), 413-454 (AHTH…QPQD), 463-503 (SKAI…SGVN), 508-553 (RHLG…PLYS), 556-596 (DNSD…EVPT), and 602-641 (AGAPALNRVSWTPSGLHVCIGDEAGKLYVYDVAENLAQPS).

The protein belongs to the dynein intermediate chain family. Homodimer. The cytoplasmic dynein 1 complex consists of two catalytic heavy chains (HCs) and a number of non-catalytic subunits presented by intermediate chains (ICs), light intermediate chains (LICs) and light chains (LCs). In terms of tissue distribution, high levels of isoform 1b, isoform 1c, isoform 3a and isoform 4 accumulate in early egg chambers and at stage 9 become concentrated at the posterior of the oocyte. Isoform 5a and isoform 5b are highly expressed in adult head and to a lesser extent in adult torso. Isoform 1a, isoform 2a and isoform 2b are found in all tissues examined, including ovaries, midgut, torso and head.

It is found in the cytoplasm. Its subcellular location is the cytoskeleton. It localises to the lysosome membrane. The protein localises to the nucleus membrane. Acts as one of several non-catalytic accessory components of the cytoplasmic dynein 1 complex that are thought to be involved in linking dynein to cargos and to adapter proteins that regulate dynein function. Cytoplasmic dynein 1 acts as a motor for the intracellular retrograde motility of vesicles and organelles along microtubules. The intermediate chains mediate the help dynein bind to dynactin 150 kDa component. The sequence is that of Cytoplasmic dynein 1 intermediate chain (sw) from Drosophila melanogaster (Fruit fly).